A 317-amino-acid chain; its full sequence is Urease accessory protein 6 (317 aa).

The protein belongs to the UreF family. URE4, URE6 and URE7 may form a complex that acts as a GTP-hydrolysis-dependent molecular chaperone, activating the urease apoprotein URE1.

Urease accessory protein required for the maturation and activation of urease via the functional incorporation of the urease nickel metallocenter. Plays a role in host brain invasion. The protein is Urease accessory protein 6 of Cryptococcus neoformans var. grubii serotype A (strain H99 / ATCC 208821 / CBS 10515 / FGSC 9487) (Filobasidiella neoformans var. grubii).